The sequence spans 371 residues: tRNA-specific 2-thiouridylase MnmA (371 aa).

ATP is bound by residues Ala9 to Ser16 and Met35. Cys109 (nucleophile) is an active-site residue. A disulfide bond links Cys109 and Cys207. Position 133 (Gly133) interacts with ATP. The interaction with tRNA stretch occupies residues Lys157–Gln159. Cys207 functions as the Cysteine persulfide intermediate in the catalytic mechanism.

Belongs to the MnmA/TRMU family.

The protein resides in the cytoplasm. The catalysed reaction is S-sulfanyl-L-cysteinyl-[protein] + uridine(34) in tRNA + AH2 + ATP = 2-thiouridine(34) in tRNA + L-cysteinyl-[protein] + A + AMP + diphosphate + H(+). In terms of biological role, catalyzes the 2-thiolation of uridine at the wobble position (U34) of tRNA, leading to the formation of s(2)U34. This is tRNA-specific 2-thiouridylase MnmA from Solibacter usitatus (strain Ellin6076).